The chain runs to 477 residues: Cysteine--tRNA ligase (477 aa).

C34 contributes to the Zn(2+) binding site. The short motif at 36 to 46 (PTVYDFAHIGN) is the 'HIGH' region element. Zn(2+) is bound by residues C235, H260, and E264. A 'KMSKS' region motif is present at residues 293–297 (KMSKS). K296 serves as a coordination point for ATP.

The protein belongs to the class-I aminoacyl-tRNA synthetase family. In terms of assembly, monomer. Requires Zn(2+) as cofactor.

Its subcellular location is the cytoplasm. The catalysed reaction is tRNA(Cys) + L-cysteine + ATP = L-cysteinyl-tRNA(Cys) + AMP + diphosphate. The sequence is that of Cysteine--tRNA ligase from Mesorhizobium japonicum (strain LMG 29417 / CECT 9101 / MAFF 303099) (Mesorhizobium loti (strain MAFF 303099)).